The following is a 383-amino-acid chain: 1-deoxy-D-xylulose 5-phosphate reductoisomerase (383 aa).

Residues Thr-10, Gly-11, Ser-12, Ile-13, Gly-36, Lys-37, Asn-38, and Asn-122 each coordinate NADPH. Lys-123 provides a ligand contact to 1-deoxy-D-xylulose 5-phosphate. Position 124 (Glu-124) interacts with NADPH. Mn(2+) is bound at residue Asp-148. The 1-deoxy-D-xylulose 5-phosphate site is built by Ser-149, Glu-150, Ser-174, and His-197. Glu-150 contacts Mn(2+). Gly-203 provides a ligand contact to NADPH. 1-deoxy-D-xylulose 5-phosphate is bound by residues Ser-210, Asn-215, Lys-216, and Glu-219. Residue Glu-219 coordinates Mn(2+).

It belongs to the DXR family. The cofactor is Mg(2+). Mn(2+) is required as a cofactor.

The enzyme catalyses 2-C-methyl-D-erythritol 4-phosphate + NADP(+) = 1-deoxy-D-xylulose 5-phosphate + NADPH + H(+). The protein operates within isoprenoid biosynthesis; isopentenyl diphosphate biosynthesis via DXP pathway; isopentenyl diphosphate from 1-deoxy-D-xylulose 5-phosphate: step 1/6. In terms of biological role, catalyzes the NADPH-dependent rearrangement and reduction of 1-deoxy-D-xylulose-5-phosphate (DXP) to 2-C-methyl-D-erythritol 4-phosphate (MEP). This Bacillus licheniformis (strain ATCC 14580 / DSM 13 / JCM 2505 / CCUG 7422 / NBRC 12200 / NCIMB 9375 / NCTC 10341 / NRRL NRS-1264 / Gibson 46) protein is 1-deoxy-D-xylulose 5-phosphate reductoisomerase.